We begin with the raw amino-acid sequence, 358 residues long: Purine permease 2 (358 aa).

10 helical membrane passes run 6-26, 37-57, 74-94, 110-130, 134-154, 170-190, 209-229, 262-282, 288-308, and 312-332; these read VLVI…PLMM, IWFP…PLLL, FFLM…LVGF, TASL…FFMV, FTPF…VLAL, VVGF…LPLV, FQMV…LAAG, VIVF…GLIF, VSGI…VICF, and FQAG…SYFY. The EamA domain occupies 46–154; that stretch reads VGCPLIFFPL…LTGGAVVLAL (109 aa).

It belongs to the purine permeases (TC 2.A.7.14) family. In terms of tissue distribution, expressed in the vascular system of leaves. Restricted to the phloem. Expressed in flowers and roots and not detected in stems.

The protein localises to the membrane. Competitive inhibition of adenine transport by isopentenyladenine, kinetin, benzylaminopurine, trans- and cis-zeatin and trans-zeatin riboside. In terms of biological role, mediates adenine transport. May be involved in the uptake of cytokinin analogs. The sequence is that of Purine permease 2 (PUP2) from Arabidopsis thaliana (Mouse-ear cress).